The following is a 243-amino-acid chain: Large ribosomal subunit protein uL3 (243 aa).

Disordered regions lie at residues 139–164 (VSHRSIGSTGGRQDPGKTFKNKKMPG) and 218–243 (KPGKFRLADGGGEQTAAAPAAEQEGV). Position 151 is an N5-methylglutamine (Gln151). The segment covering 231 to 243 (QTAAAPAAEQEGV) has biased composition (low complexity).

The protein belongs to the universal ribosomal protein uL3 family. As to quaternary structure, part of the 50S ribosomal subunit. Forms a cluster with proteins L14 and L19. In terms of processing, methylated by PrmB.

One of the primary rRNA binding proteins, it binds directly near the 3'-end of the 23S rRNA, where it nucleates assembly of the 50S subunit. This Rhodopseudomonas palustris (strain BisB18) protein is Large ribosomal subunit protein uL3.